Reading from the N-terminus, the 487-residue chain is UDP-glycosyltransferase 85A7 (487 aa).

UDP-alpha-D-glucose contacts are provided by residues 364 to 366 (CPQ), 381 to 389 (HCGWNSTLE), and 403 to 406 (FSEQ).

Belongs to the UDP-glycosyltransferase family. As to expression, expressed in roots, shoots, leaves and flowers.

The protein is UDP-glycosyltransferase 85A7 (UGT85A7) of Arabidopsis thaliana (Mouse-ear cress).